The chain runs to 603 residues: MLEIESPTSLCFRTNTTCNALLRELQKIWVDIGESDAEKDRMLMELEKECLEIYRRKVDEAANSKAQLHQSLVSIEAEIASLLAALGVFNSHSPMKAKEGSKSLKEKLAAVRPMLEDLRLQKDERMKQFVDIKAQIEKMSGEISGYSDQLNKTMVGSLALDEQDLTLRKLNEYQTHLRSLQKEKSDRLNKVLDYVNEVHTLCGVLGVDFGQTVSEVHPSLHRTDHEQSTNISDDTLDGLHHMIHKLKTERSVRFQKLKDVAGSLFELWNLMDTSQEERTKFASVSYVVRSSESDITEPNILSSETIEQVSAEVDCFNKLKASRMKELVMKRRTELENLCRLAHIEADTSTSLEKSTALIDSGLVDPSELLTNIELHINKIKEEAHSRKEIIDRIDRWLSACEEENWLEEYNQDETRYSAGRGGHVNLKHAERARITVNKIPSMVDNLIKKTLLWEDETRKSFLYDGVRLVSILEDYKLTRKQQEEEKRRYRDQKKMQDLLIKRRESIYGSKPSPRRSNSVRKTNGYNGDASVPPTPRRNSAGATNNDIMTTPRSYSSHRQNGYFKEVRRLSTAPLNFVAIPKEDSVSTYTSVCGSEPDSPLYN.

3 coiled-coil regions span residues 48-79 (KECLEIYRRKVDEAANSKAQLHQSLVSIEAEI), 131-186 (DIKA…EKSD), and 468-502 (RLVSILEDYKLTRKQQEEEKRRYRDQKKMQDLLIK). The segment at 501–559 (IKRRESIYGSKPSPRRSNSVRKTNGYNGDASVPPTPRRNSAGATNNDIMTTPRSYSSHR) is disordered. At S513 the chain carries Phosphoserine. 2 stretches are compositionally biased toward polar residues: residues 515–526 (RRSNSVRKTNGY) and 537–559 (RRNSAGATNNDIMTTPRSYSSHR). At S599 the chain carries Phosphoserine.

Belongs to the MAP65/ASE1 family. In terms of assembly, forms dimer. Binds to microtubules (MT).

It localises to the nucleus. The protein localises to the cytoplasm. The protein resides in the cytoskeleton. It is found in the spindle pole. This chain is 65-kDa microtubule-associated protein 7 (MAP65-7), found in Arabidopsis thaliana (Mouse-ear cress).